A 243-amino-acid chain; its full sequence is Pyridoxine 5'-phosphate synthase (243 aa).

Residue Asn-7 coordinates 3-amino-2-oxopropyl phosphate. Asp-9 to His-10 contacts 1-deoxy-D-xylulose 5-phosphate. Arg-18 provides a ligand contact to 3-amino-2-oxopropyl phosphate. The active-site Proton acceptor is the His-43. 1-deoxy-D-xylulose 5-phosphate is bound by residues Arg-45 and His-50. The active-site Proton acceptor is the Glu-70. Thr-100 is a 1-deoxy-D-xylulose 5-phosphate binding site. The active-site Proton donor is His-191. Residues Gly-192 and Gly-213–His-214 each bind 3-amino-2-oxopropyl phosphate.

This sequence belongs to the PNP synthase family. Homooctamer; tetramer of dimers.

It is found in the cytoplasm. It catalyses the reaction 3-amino-2-oxopropyl phosphate + 1-deoxy-D-xylulose 5-phosphate = pyridoxine 5'-phosphate + phosphate + 2 H2O + H(+). It functions in the pathway cofactor biosynthesis; pyridoxine 5'-phosphate biosynthesis; pyridoxine 5'-phosphate from D-erythrose 4-phosphate: step 5/5. Functionally, catalyzes the complicated ring closure reaction between the two acyclic compounds 1-deoxy-D-xylulose-5-phosphate (DXP) and 3-amino-2-oxopropyl phosphate (1-amino-acetone-3-phosphate or AAP) to form pyridoxine 5'-phosphate (PNP) and inorganic phosphate. This is Pyridoxine 5'-phosphate synthase from Magnetococcus marinus (strain ATCC BAA-1437 / JCM 17883 / MC-1).